Reading from the N-terminus, the 148-residue chain is Aspartate carbamoyltransferase regulatory chain (148 aa).

Cys106, Cys111, Cys134, and Cys137 together coordinate Zn(2+).

The protein belongs to the PyrI family. In terms of assembly, contains catalytic and regulatory chains. The cofactor is Zn(2+).

Its function is as follows. Involved in allosteric regulation of aspartate carbamoyltransferase. This Methanococcus maripaludis (strain C5 / ATCC BAA-1333) protein is Aspartate carbamoyltransferase regulatory chain.